Reading from the N-terminus, the 338-residue chain is MNKFLQSCVNGRTLKTGEAEKLMEMMMNGDMSQSEIGGILSVLAHRGETAEELAGFVKVMRARAQTSGGLADVVDTCGTGGDGISTFNISTAAAITASAAGAKVAKHGNRSVSSKSGSADVLEKLGVSIQATPESVKRSIEMKQMGFLFAPLFHSSMKHVAAARKELGFRTVFNLLGPLSNPLQVKRQVIGVYSFDKARLMASALEQFDVRHVMLVSARDGLDELSITAPTDIIELKNGERLEYSVSPEQFGFAEGSLKDIQVSSSEESALLIQNIFANKAPSSALHITALNAGAAIYTAGLANDLKEGTKTALEAIQNGDAKRQLERLKQKEEEMYA.

Residues G78, 81–82 (GD), T86, 88–91 (NIST), 106–114 (KHGNRSVSS), and S118 contribute to the 5-phospho-alpha-D-ribose 1-diphosphate site. G78 provides a ligand contact to anthranilate. Mg(2+) is bound at residue S90. N109 contributes to the anthranilate binding site. R164 is a binding site for anthranilate. Mg(2+)-binding residues include D223 and E224.

The protein belongs to the anthranilate phosphoribosyltransferase family. Homodimer. Requires Mg(2+) as cofactor.

The catalysed reaction is N-(5-phospho-beta-D-ribosyl)anthranilate + diphosphate = 5-phospho-alpha-D-ribose 1-diphosphate + anthranilate. It functions in the pathway amino-acid biosynthesis; L-tryptophan biosynthesis; L-tryptophan from chorismate: step 2/5. Its function is as follows. Catalyzes the transfer of the phosphoribosyl group of 5-phosphorylribose-1-pyrophosphate (PRPP) to anthranilate to yield N-(5'-phosphoribosyl)-anthranilate (PRA). This is Anthranilate phosphoribosyltransferase from Bacillus velezensis (strain DSM 23117 / BGSC 10A6 / LMG 26770 / FZB42) (Bacillus amyloliquefaciens subsp. plantarum).